The following is a 234-amino-acid chain: MHADPGIEVSLAKGFFITFEGGEGTGKSTQMRLLAEALSARGYRVLTTREPGGSVGAEAVRHVLLSGAAESFGVRMEAILFAAARSDHVEEVIRPALEQGTIVLCDRFMDSSRVYQGVTGNLEPAFVETLERVAVNGVIPDCTIIFDLPASVGLERARRRAANDSPDRFEKEQLETHEKRREAFLDIAAADPERCRVVDANRPPTAIAAEVLSLVEALLPLEGKPQPSNAEATS.

21-28 is an ATP binding site; the sequence is GGEGTGKS.

The protein belongs to the thymidylate kinase family.

The enzyme catalyses dTMP + ATP = dTDP + ADP. Its function is as follows. Phosphorylation of dTMP to form dTDP in both de novo and salvage pathways of dTTP synthesis. This Rhizobium meliloti (strain 1021) (Ensifer meliloti) protein is Thymidylate kinase.